The chain runs to 227 residues: Uridylate kinase (227 aa).

9 to 10 (GS) serves as a coordination point for ATP. Gly-44 provides a ligand contact to UMP. The ATP site is built by Gly-45 and Arg-49. UMP contacts are provided by residues Asp-66 and 114–120 (TVPGHTT). 3 residues coordinate ATP: Thr-140, Phe-146, and Asp-149.

This sequence belongs to the UMP kinase family. In terms of assembly, homohexamer.

It localises to the cytoplasm. The catalysed reaction is UMP + ATP = UDP + ADP. It functions in the pathway pyrimidine metabolism; CTP biosynthesis via de novo pathway; UDP from UMP (UMPK route): step 1/1. Inhibited by UTP. Its function is as follows. Catalyzes the reversible phosphorylation of UMP to UDP. The sequence is that of Uridylate kinase from Natronomonas pharaonis (strain ATCC 35678 / DSM 2160 / CIP 103997 / JCM 8858 / NBRC 14720 / NCIMB 2260 / Gabara) (Halobacterium pharaonis).